A 245-amino-acid chain; its full sequence is Eukaryotic translation initiation factor 4E type 2 (245 aa).

A compositionally biased stretch (basic and acidic residues) spans 1–38; it reads MNNKFDALKDDDSGDHDQNEENSTQKDGEKEKTERDKN. The segment at 1 to 52 is disordered; it reads MNNKFDALKDDDSGDHDQNEENSTQKDGEKEKTERDKNQSSSKRKAVVPGPA. A Phosphoserine modification is found at S13. The segment at 54–57 is EIF4EBP1/2/3 binding; sequence HPLQ. 78-79 serves as a coordination point for mRNA; sequence YE. Positions 95–99 are EIF4EBP1/2/3 binding; sequence WRFYS. MRNA contacts are provided by residues H110 and 124–125; that span reads WE. Residue K134 is modified to N6-acetyllysine; alternate. Residue K134 forms a Glycyl lysine isopeptide (Lys-Gly) (interchain with G-Cter in ISG15); alternate linkage. The EIF4EBP1/2/3 binding stretch occupies residues 150–157; the sequence is NLILAMLG. Residues 174–179 and 222–224 contribute to the mRNA site; these read RFQEDI and KMP. Residue K222 forms a Glycyl lysine isopeptide (Lys-Gly) (interchain with G-Cter in ISG15) linkage.

Belongs to the eukaryotic initiation factor 4E family. In terms of assembly, interacts with EIF4EBP1, EIF4EBP2 and EIF4EBP3. Does not interact with eIF4G (EIF4G1, EIF4G2 or EIF4G3). Component of the 4EHP-GYF2 complex, at least composed of EIF4E2, GIGYF2 and ZNF598. Interacts with GIGYF2 (via the 4EHP-binding motif); the interaction is direct. Interacts with EIF4ENIF1/4E-T (via YXXXXLphi motif); increasing affinity for the 7-methylguanosine-containing mRNA cap. Post-translationally, ubiquitinated by ARIH1. The consequences of ubiquitination are however unclear: according to a report, EIF4E2 ubiquitination leads to promote EIF4E2 cap-binding and protein translation arrest. According to another report ubiquitination leads to its subsequent degradation. ISGylation enhances its cap structure-binding activity and translation-inhibition activity.

Its subcellular location is the cytoplasm. The protein resides in the P-body. Recognizes and binds the 7-methylguanosine-containing mRNA cap during an early step in the initiation. Acts as a repressor of translation initiation. In contrast to EIF4E, it is unable to bind eIF4G (EIF4G1, EIF4G2 or EIF4G3), suggesting that it acts by competing with EIF4E and block assembly of eIF4F at the cap. In P-bodies, component of a complex that promotes miRNA-mediated translational repression. Involved in virus-induced host response by mediating miRNA MIR34A-induced translational silencing which controls IFNB1 production by a negative feedback mechanism. Its function is as follows. Component of the 4EHP-GYF2 complex, a multiprotein complex that acts as a repressor of translation initiation. In association with GIGYF2, assists ribosome-associated quality control (RQC) by sequestering the mRNA cap, blocking ribosome initiation and decreasing the translational load on problematic messages. Part of a pathway that works in parallel to RQC-mediated degradation of the stalled nascent polypeptide. GIGYF2 and EIF4E2 work downstream and independently of ZNF598, which seems to work as a scaffold that can recruit them to faulty mRNA even if alternative recruitment mechanisms may exist. Functionally, (Microbial infection) Upon SARS coronavirus-2/SARS-CoV-2 infection, the interaction with non-structural protein 2 (nsp2) with GIGYF2 enhances GIGYF2 binding to EIF4E2 and increases repression of translation initiation of genes involved in antiviral innate immune response such as IFNB1. In Homo sapiens (Human), this protein is Eukaryotic translation initiation factor 4E type 2.